The sequence spans 313 residues: Elongation factor Ts (313 aa).

Residues 82-85 are involved in Mg(2+) ion dislocation from EF-Tu; sequence TDFV.

This sequence belongs to the EF-Ts family.

Its subcellular location is the cytoplasm. Its function is as follows. Associates with the EF-Tu.GDP complex and induces the exchange of GDP to GTP. It remains bound to the aminoacyl-tRNA.EF-Tu.GTP complex up to the GTP hydrolysis stage on the ribosome. The sequence is that of Elongation factor Ts from Nostoc sp. (strain PCC 7120 / SAG 25.82 / UTEX 2576).